The primary structure comprises 2153 residues: Genome polyprotein (2153 aa).

Gly-2 carries N-myristoyl glycine; by host lipidation. The interval His-213–Asp-240 is disordered. Positions Pro-216–Arg-232 are enriched in polar residues. Positions Glu-565–Val-584 are amphipathic alpha-helix. Residues His-864 and Asp-880 each act as for protease 2A activity in the active site. Zn(2+) contacts are provided by Cys-897 and Cys-899. The active-site For protease 2A activity is the Cys-951. Zn(2+) contacts are provided by Cys-957 and His-959. Residues Ser-1088 to Gln-1158 form a membrane-binding region. The oligomerization stretch occupies residues Ser-1088–Thr-1224. Residues Ser-1109 to Gly-1113 are RNA-binding. Residues Thr-1187–Val-1346 form the SF3 helicase domain. Gly-1214–Ser-1221 provides a ligand contact to ATP. Residues Cys-1353, Cys-1365, and Cys-1370 each contribute to the Zn(2+) site. The C4-type; degenerate zinc-finger motif lies at Cys-1353–Cys-1370. The RNA-binding stretch occupies residues Glu-1397–Val-1404. The oligomerization stretch occupies residues Leu-1408–Gln-1413. An intramembrane segment occupies Val-1460 to Leu-1480. At Tyr-1491 the chain carries O-(5'-phospho-RNA)-tyrosine. Residues Gly-1511–Phe-1689 form the Peptidase C3 domain. Residues His-1550, Glu-1581, and Cys-1657 each act as for protease 3C activity in the active site. A RdRp catalytic domain is found at Gly-1920–Glu-2033. The Mg(2+) site is built by Asp-1926 and Asp-2019.

This sequence belongs to the picornaviruses polyprotein family. As to quaternary structure, interacts with capsid protein VP1 and capsid protein VP3 to form heterotrimeric protomers. Interacts with capsid protein VP0, and capsid protein VP3 to form heterotrimeric protomers. Five protomers subsequently associate to form pentamers which serve as building blocks for the capsid. Interacts with capsid protein VP2, capsid protein VP3 and capsid protein VP4 following cleavage of capsid protein VP0. Interacts (via C-terminus) with capsid protein VP4 (via C-terminus). Interacts with host CDHR3 (via N-terminus); this interaction occurs near each threefold vertex of the capsid and allows the virus attachment and entry into the host cell. In terms of assembly, interacts with capsid protein VP1 and capsid protein VP3 in the mature capsid. Interacts with host CDHR3 (via N-terminus); this interaction occurs near each threefold vertex of the capsid and allows the virus attachment and entry into the host cell. As to quaternary structure, interacts with capsid protein VP0 and capsid protein VP1 to form heterotrimeric protomers. Five protomers subsequently associate to form pentamers which serve as building blocks for the capsid. Interacts with capsid protein VP4 in the mature capsid. Interacts with protein 2C; this interaction may be important for virion morphogenesis. Interacts with host CDHR3 (via N-terminus); this interaction occurs near each threefold vertex of the capsid and allows the virus attachment and entry into the host cell. Interacts (via C-terminus) with capsid protein VP1 (via C-terminus). Interacts with capsid protein VP3. In terms of assembly, homodimer. As to quaternary structure, homohexamer; forms a hexameric ring structure with 6-fold symmetry characteristic of AAA+ ATPases. Interacts (via N-terminus) with host RTN3 (via reticulon domain); this interaction is important for viral replication. Interacts with capsid protein VP3; this interaction may be important for virion morphogenesis. Interacts with protein 3CD. In terms of assembly, homodimer. Interacts with host GBF1. Interacts (via GOLD domain) with host ACBD3 (via GOLD domain); this interaction allows the formation of a viral protein 3A/ACBD3 heterotetramer with a 2:2 stoichiometry, which will stimulate the recruitment of host PI4KB in order to synthesize PI4P at the viral RNA replication sites. As to quaternary structure, interacts with RNA-directed RNA polymerase. Interacts with protein 3AB and with RNA-directed RNA polymerase. In terms of assembly, interacts with Viral protein genome-linked and with protein 3CD. Mg(2+) is required as a cofactor. Specific enzymatic cleavages in vivo by the viral proteases yield processing intermediates and the mature proteins. In terms of processing, myristoylation is required for the formation of pentamers during virus assembly. Further assembly of 12 pentamers and a molecule of genomic RNA generates the provirion. Post-translationally, during virion maturation, immature virions are rendered infectious following cleavage of VP0 into VP4 and VP2. This maturation seems to be an autocatalytic event triggered by the presence of RNA in the capsid and it is followed by a conformational change infectious virion. Myristoylation is required during RNA encapsidation and formation of the mature virus particle. In terms of processing, VPg is uridylylated by the polymerase into VPg-pUpU. This acts as a nucleotide-peptide primer for the genomic RNA replication.

Its subcellular location is the virion. The protein localises to the host cytoplasm. It localises to the host cytoplasmic vesicle membrane. The protein resides in the host nucleus. The catalysed reaction is a ribonucleoside 5'-triphosphate + H2O = a ribonucleoside 5'-diphosphate + phosphate + H(+). It catalyses the reaction Selective cleavage of Gln-|-Gly bond in the poliovirus polyprotein. In other picornavirus reactions Glu may be substituted for Gln, and Ser or Thr for Gly.. It carries out the reaction Selective cleavage of Tyr-|-Gly bond in the picornavirus polyprotein.. The enzyme catalyses RNA(n) + a ribonucleoside 5'-triphosphate = RNA(n+1) + diphosphate. Its activity is regulated as follows. Replication or transcription is subject to high level of random mutations by the nucleotide analog ribavirin. Its function is as follows. Forms an icosahedral capsid of pseudo T=3 symmetry with capsid proteins VP2 and VP3. The capsid is 300 Angstroms in diameter, composed of 60 copies of each capsid protein and enclosing the viral positive strand RNA genome. Capsid protein VP1 mainly forms the vertices of the capsid. The VP1 C-termini form 60 dominant spike-like protrusions on the surface of the virion. Capsid protein VP1 interacts with host cell receptor CDHR3 to provide virion attachment to target host cells. This attachment induces virion internalization. Tyrosine kinases are probably involved in the entry process. After binding to its receptor, the capsid undergoes conformational changes. Capsid protein VP1 N-terminus (that contains an amphipathic alpha-helix) and capsid protein VP4 are externalized. Together, they shape a pore in the host membrane through which viral genome is translocated to host cell cytoplasm. Functionally, forms an icosahedral capsid of pseudo T=3 symmetry with capsid proteins VP2 and VP3. The capsid is 300 Angstroms in diameter, composed of 60 copies of each capsid protein and enclosing the viral positive strand RNA genome. Lies on the inner surface of the capsid shell. After binding to the host receptor, the capsid undergoes conformational changes. Capsid protein VP4 is released, Capsid protein VP1 N-terminus is externalized, and together, they shape a pore in the host membrane through which the viral genome is translocated into the host cell cytoplasm. In terms of biological role, component of immature procapsids, which is cleaved into capsid proteins VP4 and VP2 after maturation. Allows the capsid to remain inactive before the maturation step. Its function is as follows. Cysteine protease that cleaves viral polyprotein and specific host proteins. It is responsible for the autocatalytic cleavage between the P1 and P2 regions, which is the first cleavage occurring in the polyprotein. Also cleaves the host translation initiation factor EIF4G1, in order to shut down the capped cellular mRNA translation. Inhibits the host nucleus-cytoplasm protein and RNA trafficking by cleaving host members of the nuclear pores. Counteracts stress granule formation probably by antagonizing its assembly or promoting its dissassembly. Functionally, plays an essential role in the virus replication cycle by acting as a viroporin. Creates a pore in the host endoplasmic reticulum and as a consequence releases Ca2+ in the cytoplasm of infected cell. In turn, high levels of cytoplasmic calcium may trigger membrane trafficking and transport of viral ER-associated proteins to viroplasms, sites of viral genome replication. Induces and associates with structural rearrangements of intracellular membranes. Displays RNA-binding, nucleotide binding and NTPase activities. May play a role in virion morphogenesis and viral RNA encapsidation by interacting with the capsid protein VP3. In terms of biological role, localizes the viral replication complex to the surface of membranous vesicles. Together with protein 3CD binds the Cis-Active RNA Element (CRE) which is involved in RNA synthesis initiation. Acts as a cofactor to stimulate the activity of 3D polymerase, maybe through a nucleid acid chaperone activity. Its function is as follows. Localizes the viral replication complex to the surface of membranous vesicles. It inhibits host cell endoplasmic reticulum-to-Golgi apparatus transport and causes the disassembly of the Golgi complex, possibly through GBF1 interaction. This would result in depletion of MHC, trail receptors and IFN receptors at the host cell surface. Plays an essential role in viral RNA replication by recruiting ACBD3 and PI4KB at the viral replication sites, thereby allowing the formation of the rearranged membranous structures where viral replication takes place. Functionally, acts as a primer for viral RNA replication and remains covalently bound to viral genomic RNA. VPg is uridylylated prior to priming replication into VPg-pUpU. The oriI viral genomic sequence may act as a template for this. The VPg-pUpU is then used as primer on the genomic RNA poly(A) by the RNA-dependent RNA polymerase to replicate the viral genome. During genome replication, the VPg-RNA linkage is removed by the host TDP2, thereby accelerating replication. During the late stage of the replication cycle, host TDP2 is excluded from sites of viral RNA synthesis and encapsidation, allowing for the generation of progeny virions. Involved in the viral replication complex and viral polypeptide maturation. It exhibits protease activity with a specificity and catalytic efficiency that is different from protease 3C. Protein 3CD lacks polymerase activity. Protein 3CD binds to the 5'UTR of the viral genome. In terms of biological role, major viral protease that mediates proteolytic processing of the polyprotein. Cleaves host EIF5B, contributing to host translation shutoff. Also cleaves host PABPC1, contributing to host translation shutoff. Its function is as follows. Replicates the viral genomic RNA on the surface of intracellular membranes. May form linear arrays of subunits that propagate along a strong head-to-tail interaction called interface-I. Covalently attaches UMP to a tyrosine of VPg, which is used to prime RNA synthesis. The positive stranded RNA genome is first replicated at virus induced membranous vesicles, creating a dsRNA genomic replication form. This dsRNA is then used as template to synthesize positive stranded RNA genomes. ss(+)RNA genomes are either translated, replicated or encapsidated. This Homo sapiens (Human) protein is Genome polyprotein.